The sequence spans 336 residues: tRNA N6-adenosine threonylcarbamoyltransferase (336 aa).

The Fe cation site is built by His-112 and His-116. Substrate-binding positions include 136 to 140, Asp-169, Gly-182, and Asn-276; that span reads LVSGG. Asp-304 lines the Fe cation pocket.

The protein belongs to the KAE1 / TsaD family. Fe(2+) is required as a cofactor.

Its subcellular location is the cytoplasm. It catalyses the reaction L-threonylcarbamoyladenylate + adenosine(37) in tRNA = N(6)-L-threonylcarbamoyladenosine(37) in tRNA + AMP + H(+). In terms of biological role, required for the formation of a threonylcarbamoyl group on adenosine at position 37 (t(6)A37) in tRNAs that read codons beginning with adenine. Is involved in the transfer of the threonylcarbamoyl moiety of threonylcarbamoyl-AMP (TC-AMP) to the N6 group of A37, together with TsaE and TsaB. TsaD likely plays a direct catalytic role in this reaction. This is tRNA N6-adenosine threonylcarbamoyltransferase from Francisella tularensis subsp. tularensis (strain FSC 198).